Here is an 881-residue protein sequence, read N- to C-terminus: Alanine--tRNA ligase (881 aa).

Zn(2+) is bound by residues histidine 563, histidine 567, cysteine 672, and histidine 676.

Belongs to the class-II aminoacyl-tRNA synthetase family. Requires Zn(2+) as cofactor.

It localises to the cytoplasm. The enzyme catalyses tRNA(Ala) + L-alanine + ATP = L-alanyl-tRNA(Ala) + AMP + diphosphate. Its function is as follows. Catalyzes the attachment of alanine to tRNA(Ala) in a two-step reaction: alanine is first activated by ATP to form Ala-AMP and then transferred to the acceptor end of tRNA(Ala). Also edits incorrectly charged Ser-tRNA(Ala) and Gly-tRNA(Ala) via its editing domain. This Azorhizobium caulinodans (strain ATCC 43989 / DSM 5975 / JCM 20966 / LMG 6465 / NBRC 14845 / NCIMB 13405 / ORS 571) protein is Alanine--tRNA ligase.